The sequence spans 613 residues: MDEFVKSLLKANYLITPSAYYLLREYYEKGEFSIVELVKFARSRESYIITDALATEFLKVKGLEPILPVETKGGFVSTGESQKEQSYEESFGTKEEISQEIKEGESFISTGSEPLEEELNSIGIEEIGANEELVSNGNDNGGEAIVFDKYGYPMVYAPEEIEVEEKEYSKYEDLTIPMNPDFNYVEIKEDYDVVFDVRNVKLKPPKVKNGNGKEGEIIVEAYASLFRSRLKKLRKILRENPELDNVVDIGKLKYVKEDETVTIIGLVNSKREVNKGLIFEIEDLTGKVKVFLPKDSEDYREAFKVLPDAVVAFKGVYSKRGILYANKFYLPDVPLYRRQKPPLEEKVYAILISDIHVGSKEFCENAFIKFLEWLNGNVETKEEEEIVSRVKYLIIAGDVVDGVGVYPGQYADLTIPDIFDQYEALANLLSHVPKHITMFIAPGNHDAARQAIPQPEFYKEYAKPIYKLKNAVIISNPAVIRLHGRDFLIAHGRGIEDVVGSVPGLTHHKPGLPMVELLKMRHVAPMFGGKVPIAPDPEDLLVIEEVPDVVHMGHVHVYDAVVYRGVQLVNSATWQAQTEFQKMVNIVPTPAKVPVVDIDTAKVVKVLDFSGWC.

It belongs to the DNA polymerase delta/II small subunit family. In terms of assembly, heterodimer of a large subunit and a small subunit.

The catalysed reaction is DNA(n) + a 2'-deoxyribonucleoside 5'-triphosphate = DNA(n+1) + diphosphate. It carries out the reaction Exonucleolytic cleavage in the 3'- to 5'-direction to yield nucleoside 5'-phosphates.. Its function is as follows. Possesses two activities: a DNA synthesis (polymerase) and an exonucleolytic activity that degrades single-stranded DNA in the 3' to 5' direction. Has a template-primer preference which is characteristic of a replicative DNA polymerase. In Pyrococcus furiosus (strain ATCC 43587 / DSM 3638 / JCM 8422 / Vc1), this protein is DNA polymerase II small subunit (polB).